Here is a 267-residue protein sequence, read N- to C-terminus: MNDILDQIMAAKRAEVAAAQKRVPLAAVRADAESRVLTRDFEGALRAKISQGQAAVIAEIKKASPSKGLLRADFIAADIAQSYAEGDAGVSAACLSVLTDQAFFQGSIDYLKQARASCQLPVLRKDFLLDPYQVYEARAMGADAILLIAACLDDAQLADFEAIARSLDMAVLLEVHDRPELERALARCKTPLVGINNRNLRSFEVSLSTTLDMLADMPPERLPVTESGILTPQDVKTLRDAGVQAFLVGEAFMRAADPGLALARLFA.

Belongs to the TrpC family.

It carries out the reaction 1-(2-carboxyphenylamino)-1-deoxy-D-ribulose 5-phosphate + H(+) = (1S,2R)-1-C-(indol-3-yl)glycerol 3-phosphate + CO2 + H2O. It participates in amino-acid biosynthesis; L-tryptophan biosynthesis; L-tryptophan from chorismate: step 4/5. The protein is Indole-3-glycerol phosphate synthase of Verminephrobacter eiseniae (strain EF01-2).